We begin with the raw amino-acid sequence, 171 residues long: Deoxyuridine 5'-triphosphate nucleotidohydrolase (171 aa).

Mg(2+) is bound at residue E143.

It belongs to the dUTPase family. In terms of assembly, homotrimer. Mg(2+) is required as a cofactor.

It carries out the reaction dUTP + H2O = dUMP + diphosphate + H(+). It participates in pyrimidine metabolism; dUMP biosynthesis; dUMP from dCTP (dUTP route): step 2/2. Its function is as follows. This enzyme is involved in nucleotide metabolism: it produces dUMP, the immediate precursor of thymidine nucleotides and it decreases the intracellular concentration of dUTP, preventing uracil incorporation into DNA. The chain is Deoxyuridine 5'-triphosphate nucleotidohydrolase (DUT) from Oryza sativa subsp. japonica (Rice).